A 365-amino-acid polypeptide reads, in one-letter code: Protein RecA (365 aa).

73–80 (GPESSGKT) lines the ATP pocket.

Belongs to the RecA family.

It localises to the cytoplasm. Can catalyze the hydrolysis of ATP in the presence of single-stranded DNA, the ATP-dependent uptake of single-stranded DNA by duplex DNA, and the ATP-dependent hybridization of homologous single-stranded DNAs. It interacts with LexA causing its activation and leading to its autocatalytic cleavage. The protein is Protein RecA of Prochlorococcus marinus (strain MIT 9301).